Reading from the N-terminus, the 31-residue chain is Photosystem II reaction center protein T (31 aa).

A helical transmembrane segment spans residues 3 to 23 (ALVYTFLLIGTLGIIFFAIFF).

This sequence belongs to the PsbT family. As to quaternary structure, PSII is composed of 1 copy each of membrane proteins PsbA, PsbB, PsbC, PsbD, PsbE, PsbF, PsbH, PsbI, PsbJ, PsbK, PsbL, PsbM, PsbT, PsbY, PsbZ, Psb30/Ycf12, at least 3 peripheral proteins of the oxygen-evolving complex and a large number of cofactors. It forms dimeric complexes.

The protein localises to the plastid. Its subcellular location is the chloroplast thylakoid membrane. Its function is as follows. Found at the monomer-monomer interface of the photosystem II (PS II) dimer, plays a role in assembly and dimerization of PSII. PSII is a light-driven water plastoquinone oxidoreductase, using light energy to abstract electrons from H(2)O, generating a proton gradient subsequently used for ATP formation. This Tetradesmus obliquus (Green alga) protein is Photosystem II reaction center protein T.